We begin with the raw amino-acid sequence, 107 residues long: Quaternary ammonium compound-resistance protein QacH (107 aa).

4 consecutive transmembrane segments (helical) span residues 1 to 21 (MPYLYLLLSIVSEVIGSAFLK), 26 to 46 (FSKLYPTITTIISFLICFYFL), 57 to 77 (ITYASWAGLGLVLTTIVSVLI), and 84 to 104 (LISIISIILIIFGVVLLNTFG).

The protein belongs to the drug/metabolite transporter (DMT) superfamily. Small multidrug resistance (SMR) (TC 2.A.7.1) family.

Its subcellular location is the cell membrane. Its function is as follows. Multidrug exporter. Is implicated for the resistance to bacteriocidal quaternary ammonium compounds. This is Quaternary ammonium compound-resistance protein QacH (qacH) from Staphylococcus saprophyticus.